Reading from the N-terminus, the 552-residue chain is CTP synthase (552 aa).

Residues 1-270 are amidoligase domain; that stretch reads MTKYVFVTGG…DRIICEELKL (270 aa). Residue Ser13 participates in CTP binding. Ser13 lines the UTP pocket. Residues 14–19 and Asp71 each bind ATP; that span reads SLGKGI. Mg(2+) is bound by residues Asp71 and Glu144. CTP is bound by residues 151–153, 191–196, and Lys227; these read DIE and KTKPTQ. UTP contacts are provided by residues 191–196 and Lys227; that span reads KTKPTQ. The 253-residue stretch at 295–547 folds into the Glutamine amidotransferase type-1 domain; the sequence is TIGMVGKYVD…VEAAFANKQA (253 aa). Residue Gly356 coordinates L-glutamine. Cys383 (nucleophile; for glutamine hydrolysis) is an active-site residue. L-glutamine-binding positions include 384-387, Glu407, and Arg473; that span reads LGMQ. Residues His520 and Glu522 contribute to the active site.

It belongs to the CTP synthase family. Homotetramer.

The catalysed reaction is UTP + L-glutamine + ATP + H2O = CTP + L-glutamate + ADP + phosphate + 2 H(+). It catalyses the reaction L-glutamine + H2O = L-glutamate + NH4(+). The enzyme catalyses UTP + NH4(+) + ATP = CTP + ADP + phosphate + 2 H(+). Its pathway is pyrimidine metabolism; CTP biosynthesis via de novo pathway; CTP from UDP: step 2/2. Allosterically activated by GTP, when glutamine is the substrate; GTP has no effect on the reaction when ammonia is the substrate. The allosteric effector GTP functions by stabilizing the protein conformation that binds the tetrahedral intermediate(s) formed during glutamine hydrolysis. Inhibited by the product CTP, via allosteric rather than competitive inhibition. Functionally, catalyzes the ATP-dependent amination of UTP to CTP with either L-glutamine or ammonia as the source of nitrogen. Regulates intracellular CTP levels through interactions with the four ribonucleotide triphosphates. This chain is CTP synthase, found in Burkholderia ambifaria (strain ATCC BAA-244 / DSM 16087 / CCUG 44356 / LMG 19182 / AMMD) (Burkholderia cepacia (strain AMMD)).